The sequence spans 644 residues: MEAERGPERRPAERSSPGQTPEEGAQALAEFAALHGPALRASGVPERYWGRLLHKLEHEVFDAGEVFGIMQVEEVEEEEDEAAREVRKQQPNPGNELCYKVIVTRESGLQAAHPNSIFLIDHAWTCRVEHARQQLQQVPGLLHRMANLMGIEFHGELPSTEAVALVLEEMWKFNQTYQLAHGTAEEKMPVWYIMDEFGSRIQHADVPSFATAPFFYMPQQVAYTLLWPLRDLDTGEEVTRDFAYGETDPLIRKCMLLPWAPTDMLDLSSCTPEPPAEHYQAILEENKEKLPLDINPVVHPHGHIFKVYTDVQQVASSLTHPRFTLTQSEADADILFNFSHFKDYRKLSQERPGVLLNQFPCENLLTVKDCLASIARRAGGPEGPPWLPRTFNLRTELPQFVSYFQQRERWGEDNHWICKPWNLARSLDTHVTKSLHSIIRHRESTPKVVSKYIESPVLFLREDVGKVKFDIRYIVLLRSVRPLRLFVYDVFWLRFSNRAFALNDLDDYEKHFTVMNYDPDVVLKQVHCEEFIPEFEKQYPEFPWTDVQAEIFRAFTELFQVACAKPPPLGLCDYPSSRAMYAVDLMLKWDNGPDGRRVMQPQILEVNFNPDCERACRYHPTFFNDVFSTLFLDQPGGCHVTCLV.

Residues 1–13 (MEAERGPERRPAE) are compositionally biased toward basic and acidic residues. The disordered stretch occupies residues 1–25 (MEAERGPERRPAERSSPGQTPEEGA). The TTL domain maps to 300–644 (PHGHIFKVYT…PGGCHVTCLV (345 aa)). Residues 450–453 (SKYI), lysine 468, and aspartate 470 contribute to the ATP site.

Belongs to the tubulin--tyrosine ligase family. In terms of assembly, interacts with MAVS; the interaction prevents MAVS binding to TBK1 and IKBKE. Interacts (via N-terminus) with TBK1 (via protein kinase domain). Interacts (via TTL domain) with IKBKE (via protein kinase domain). Interacts with tubulin alpha. Interacts with histone H3 and histone H4 (when trimethylated at 'Lys-20' (H4K20me3)). Interacts with CBX3. Expressed in the basal layer of prostate and endothelial cells. Increased expression in prostatic intraepithelial neoplasia and metastatic lesions.

The protein resides in the cytoplasm. Its subcellular location is the midbody. It is found in the cytoskeleton. It localises to the microtubule organizing center. The protein localises to the centrosome. The protein resides in the spindle. Its subcellular location is the nucleus. In terms of biological role, negatively regulates post-translational modifications of tubulin, including detyrosination of the C-terminus and polyglutamylation of glutamate residues. Also, indirectly promotes histone H4 trimethylation at 'Lys-20' (H4K20me3). Probably by controlling tubulin and/or histone H4 post-translational modifications, plays a role in mitosis and in maintaining chromosome number stability. During RNA virus-mediated infection, acts as a negative regulator of the RIG-I pathway by preventing MAVS binding to TBK1 and IKBKE. This chain is Tubulin--tyrosine ligase-like protein 12 (TTLL12), found in Homo sapiens (Human).